We begin with the raw amino-acid sequence, 72 residues long: Translation initiation factor IF-1 (72 aa).

In terms of domain architecture, S1-like spans 1–72 (MAKSDVIEME…SKGRIVYRAR (72 aa)).

Belongs to the IF-1 family. In terms of assembly, component of the 30S ribosomal translation pre-initiation complex which assembles on the 30S ribosome in the order IF-2 and IF-3, IF-1 and N-formylmethionyl-tRNA(fMet); mRNA recruitment can occur at any time during PIC assembly.

The protein localises to the cytoplasm. Functionally, one of the essential components for the initiation of protein synthesis. Stabilizes the binding of IF-2 and IF-3 on the 30S subunit to which N-formylmethionyl-tRNA(fMet) subsequently binds. Helps modulate mRNA selection, yielding the 30S pre-initiation complex (PIC). Upon addition of the 50S ribosomal subunit IF-1, IF-2 and IF-3 are released leaving the mature 70S translation initiation complex. The protein is Translation initiation factor IF-1 of Marinobacter nauticus (strain ATCC 700491 / DSM 11845 / VT8) (Marinobacter aquaeolei).